Reading from the N-terminus, the 420-residue chain is Zinc finger protein 362 (420 aa).

Disordered regions lie at residues 1-28 (MSRS…WPPP), 54-80 (RPPH…ESSQ), and 115-155 (VTGL…SQSR). A compositionally biased stretch (low complexity) spans 121 to 154 (STRTPSVSTSESSAGAGTGTGTSTPSTPTTTSQS). Thr-162 carries the post-translational modification Phosphothreonine. Residues 178-202 (TIQGHGLLGPPKSERGRKKIKAENP) are disordered. Lys-198 is covalently cross-linked (Glycyl lysine isopeptide (Lys-Gly) (interchain with G-Cter in SUMO2)). 6 C2H2-type zinc fingers span residues 227–249 (YRCK…SKSH), 255–277 (HKCP…LRIH), 283–305 (YHCS…TRIH), 311–335 (YKCP…QRQH), 341–363 (YKCP…LSAH), and 371–393 (YCCS…MSKH). Ser-404 is modified (phosphoserine).

This sequence belongs to the krueppel C2H2-type zinc-finger protein family.

Its subcellular location is the nucleus. Functionally, may be involved in transcriptional regulation. The chain is Zinc finger protein 362 (ZNF362) from Homo sapiens (Human).